A 91-amino-acid polypeptide reads, in one-letter code: Putative 26S proteasome complex subunit sem-1 (91 aa).

The disordered stretch occupies residues 1-73 (MASTQPKNDA…SWDDDDTSDD (73 aa)). Positions 8 to 28 (NDAKSTEPKPEQPVTEKKTAV) are enriched in basic and acidic residues. Composition is skewed to acidic residues over residues 29–48 (LEED…AEDT) and 63–72 (ESWDDDDTSD).

It belongs to the DSS1/SEM1 family. Part of the 26S proteasome.

Functionally, subunit of the 26S proteasome which plays a role in ubiquitin-dependent proteolysis. The protein is Putative 26S proteasome complex subunit sem-1 (sem-1) of Neurospora crassa (strain ATCC 24698 / 74-OR23-1A / CBS 708.71 / DSM 1257 / FGSC 987).